Here is an 899-residue protein sequence, read N- to C-terminus: Suppressor of glycerol defect protein 1 (899 aa).

Basic and acidic residues predominate over residues 24-33 (QDERFSISEG). Disordered stretches follow at residues 24–181 (QDER…VSYP) and 248–326 (ETNS…DDSE). The span at 34–49 (KKRRRGNGKHLSRKEK) shows a compositional bias: basic residues. A compositionally biased stretch (polar residues) spans 65-77 (REINSSRLKSAPT). Over residues 103 to 126 (DESESNENWDSDEVLTDEVAEESG) the composition is skewed to acidic residues. Basic and acidic residues-rich tracts occupy residues 134 to 143 (ETMKKLESLK), 162 to 174 (SYEK…RDTN), and 251 to 264 (SMRK…KAFS). Over residues 265–292 (SDDDLSASDFEDSDGLSESDNDSVADSD) the composition is skewed to acidic residues. Residues 335-540 (SKKVNSSLNK…DTMSDLKNNR (206 aa)) form the MIF4G domain. Positions 644–781 (DIRRAIFISI…KLDVFKHVPF (138 aa)) constitute an MI domain. Residue S736 is modified to Phosphoserine.

This sequence belongs to the CWC22 family. In terms of assembly, interacts with PLC1.

It is found in the nucleus. The protein resides in the nucleolus. Involved in osmoregulatory glycerol response, probably through its interaction with PLC1 which regulates the expression of GDP1. The polypeptide is Suppressor of glycerol defect protein 1 (SGD1) (Saccharomyces cerevisiae (strain ATCC 204508 / S288c) (Baker's yeast)).